A 367-amino-acid chain; its full sequence is Protein SUPPRESSOR OF FRI 4 (367 aa).

The BED-type zinc-finger motif lies at 7–66; the sequence is RATEKVWCYYCDREFDDEKILVQHQKAKHFKCHVCHKKLSTASGMVIHVLQVHKENVTKV. Zn(2+) contacts are provided by Cys-38, Cys-41, His-54, and His-59. The tract at residues 246-309 is disordered; sequence PFSAPLPVGG…PPVIANKAPS (64 aa). A compositionally biased stretch (polar residues) spans 273 to 295; it reads PNNSIPGGTNAHSYASGPNTSGP.

In terms of assembly, homodimer. Component of the transcription activator complex FRI-C composed of FRI, FRL1, SUF4, FLX and FES1. Interacts with LD, ASHH2, FRL1, (via C-terminus) with FRI (via C-terminus), and with SWC6, a component of the SWR1 chromatin-remodeling complex. Binds to MED18 to regulate flowering time; recruits MED18 to FLC promoter. As to expression, expressed in root, shoot apex, leaves, stem and flowers. Expressed in expanding leaves, in the vasculature of fully expanded leaves, in the inflorescence, throughout young floral primordia, in the carpels of older flowers and in fertilized ovules.

Its subcellular location is the nucleus. In terms of biological role, sequence-specific DNA binding factor that recognizes the 5'-CCAAATTTTAAGTTT-3' sequence. Recruits the FRI-C complex to the FLC promoter. Required for FRI-mediated FLC activation, but has no effect on the expression of MAF1, MAF2, MAF3, MAF5, UFC and CO. Dispensable for the reactivation of FLC in early embryogenesis, but required to maintain high levels of FLC expression in later embryonic and vegetative development. The chain is Protein SUPPRESSOR OF FRI 4 from Arabidopsis thaliana (Mouse-ear cress).